Consider the following 251-residue polypeptide: Octanoyltransferase (251 aa).

Positions 29–216 (GVIQDTLLLL…NFGFIFKEQV (188 aa)) constitute a BPL/LPL catalytic domain. Substrate is bound by residues 74-81 (RGGDVTFH), 146-148 (AIG), and 159-161 (GFA). Cys177 functions as the Acyl-thioester intermediate in the catalytic mechanism.

It belongs to the LipB family.

Its subcellular location is the cytoplasm. It carries out the reaction octanoyl-[ACP] + L-lysyl-[protein] = N(6)-octanoyl-L-lysyl-[protein] + holo-[ACP] + H(+). It functions in the pathway protein modification; protein lipoylation via endogenous pathway; protein N(6)-(lipoyl)lysine from octanoyl-[acyl-carrier-protein]: step 1/2. Its function is as follows. Catalyzes the transfer of endogenously produced octanoic acid from octanoyl-acyl-carrier-protein onto the lipoyl domains of lipoate-dependent enzymes. Lipoyl-ACP can also act as a substrate although octanoyl-ACP is likely to be the physiological substrate. In Koribacter versatilis (strain Ellin345), this protein is Octanoyltransferase.